Reading from the N-terminus, the 153-residue chain is 6,7-dimethyl-8-ribityllumazine synthase (153 aa).

5-amino-6-(D-ribitylamino)uracil contacts are provided by residues phenylalanine 22, 56-58 (AFE), and 80-82 (TVI). A (2S)-2-hydroxy-3-oxobutyl phosphate-binding site is contributed by 85 to 86 (ST). Histidine 88 (proton donor) is an active-site residue. Phenylalanine 113 is a 5-amino-6-(D-ribitylamino)uracil binding site. Arginine 127 lines the (2S)-2-hydroxy-3-oxobutyl phosphate pocket.

It belongs to the DMRL synthase family. As to quaternary structure, forms an icosahedral capsid composed of 60 subunits, arranged as a dodecamer of pentamers.

The enzyme catalyses (2S)-2-hydroxy-3-oxobutyl phosphate + 5-amino-6-(D-ribitylamino)uracil = 6,7-dimethyl-8-(1-D-ribityl)lumazine + phosphate + 2 H2O + H(+). It functions in the pathway cofactor biosynthesis; riboflavin biosynthesis; riboflavin from 2-hydroxy-3-oxobutyl phosphate and 5-amino-6-(D-ribitylamino)uracil: step 1/2. Catalyzes the formation of 6,7-dimethyl-8-ribityllumazine by condensation of 5-amino-6-(D-ribitylamino)uracil with 3,4-dihydroxy-2-butanone 4-phosphate. This is the penultimate step in the biosynthesis of riboflavin. In Actinobacillus pleuropneumoniae serotype 5b (strain L20), this protein is 6,7-dimethyl-8-ribityllumazine synthase.